A 712-amino-acid polypeptide reads, in one-letter code: Polyphosphate kinase (712 aa).

Residue Asn49 participates in ATP binding. 2 residues coordinate Mg(2+): Arg398 and Arg428. The active-site Phosphohistidine intermediate is the His458. Tyr491, Arg587, and His615 together coordinate ATP.

It belongs to the polyphosphate kinase 1 (PPK1) family. Mg(2+) serves as cofactor. An intermediate of this reaction is the autophosphorylated ppk in which a phosphate is covalently linked to a histidine residue through a N-P bond.

The enzyme catalyses [phosphate](n) + ATP = [phosphate](n+1) + ADP. Functionally, catalyzes the reversible transfer of the terminal phosphate of ATP to form a long-chain polyphosphate (polyP). The sequence is that of Polyphosphate kinase from Parasynechococcus marenigrum (strain WH8102).